Reading from the N-terminus, the 675-residue chain is Acetyl-coenzyme A synthetase 2 (675 aa).

Residues 206 to 209 (RGGK) and T325 contribute to the CoA site. ATP contacts are provided by residues 401-403 (GEP), 425-430 (DTMWQT), D516, and R531. A CoA-binding site is contributed by S539. An ATP-binding site is contributed by R542. Residue R604 participates in CoA binding.

It belongs to the ATP-dependent AMP-binding enzyme family.

It catalyses the reaction acetate + ATP + CoA = acetyl-CoA + AMP + diphosphate. This is Acetyl-coenzyme A synthetase 2 (ACS2) from Zygosaccharomyces bailii.